A 337-amino-acid polypeptide reads, in one-letter code: tRNA-dihydrouridine synthase B (337 aa).

Residues 19-21 (PMA) and glutamine 73 each bind FMN. Cysteine 103 acts as the Proton donor in catalysis. Residues lysine 142, 203–205 (NGD), and 227–228 (GR) contribute to the FMN site.

Belongs to the Dus family. DusB subfamily. FMN serves as cofactor.

It catalyses the reaction a 5,6-dihydrouridine in tRNA + NAD(+) = a uridine in tRNA + NADH + H(+). It carries out the reaction a 5,6-dihydrouridine in tRNA + NADP(+) = a uridine in tRNA + NADPH + H(+). Its function is as follows. Catalyzes the synthesis of 5,6-dihydrouridine (D), a modified base found in the D-loop of most tRNAs, via the reduction of the C5-C6 double bond in target uridines. The protein is tRNA-dihydrouridine synthase B of Pseudomonas syringae pv. tomato (strain ATCC BAA-871 / DC3000).